The following is a 285-amino-acid chain: Nucleotide-binding protein CD630_34000 (285 aa).

8–15 (GLSGSGKS) lines the ATP pocket. 59 to 62 (DIRG) lines the GTP pocket.

Belongs to the RapZ-like family.

Displays ATPase and GTPase activities. The polypeptide is Nucleotide-binding protein CD630_34000 (Clostridioides difficile (strain 630) (Peptoclostridium difficile)).